A 258-amino-acid chain; its full sequence is Ribosomal RNA small subunit methyltransferase A (258 aa).

S-adenosyl-L-methionine is bound by residues His-13, Leu-15, Gly-40, Glu-61, Asp-86, and Asn-106.

It belongs to the class I-like SAM-binding methyltransferase superfamily. rRNA adenine N(6)-methyltransferase family. RsmA subfamily.

Its subcellular location is the cytoplasm. It catalyses the reaction adenosine(1518)/adenosine(1519) in 16S rRNA + 4 S-adenosyl-L-methionine = N(6)-dimethyladenosine(1518)/N(6)-dimethyladenosine(1519) in 16S rRNA + 4 S-adenosyl-L-homocysteine + 4 H(+). Functionally, specifically dimethylates two adjacent adenosines (A1518 and A1519) in the loop of a conserved hairpin near the 3'-end of 16S rRNA in the 30S particle. May play a critical role in biogenesis of 30S subunits. The protein is Ribosomal RNA small subunit methyltransferase A of Coxiella burnetii (strain CbuG_Q212) (Coxiella burnetii (strain Q212)).